The chain runs to 439 residues: Phosphomethylpyrimidine synthase (439 aa).

Residues asparagine 67, methionine 96, tyrosine 126, histidine 165, 187-189 (SRG), 228-231 (DSLR), and glutamate 267 contribute to the substrate site. Histidine 271 lines the Zn(2+) pocket. Position 294 (tyrosine 294) interacts with substrate. Residue histidine 335 participates in Zn(2+) binding. Cysteine 411, cysteine 414, and cysteine 418 together coordinate [4Fe-4S] cluster.

It belongs to the ThiC family. Requires [4Fe-4S] cluster as cofactor.

It carries out the reaction 5-amino-1-(5-phospho-beta-D-ribosyl)imidazole + S-adenosyl-L-methionine = 4-amino-2-methyl-5-(phosphooxymethyl)pyrimidine + CO + 5'-deoxyadenosine + formate + L-methionine + 3 H(+). The protein operates within cofactor biosynthesis; thiamine diphosphate biosynthesis. Functionally, catalyzes the synthesis of the hydroxymethylpyrimidine phosphate (HMP-P) moiety of thiamine from aminoimidazole ribotide (AIR) in a radical S-adenosyl-L-methionine (SAM)-dependent reaction. This chain is Phosphomethylpyrimidine synthase, found in Ignicoccus hospitalis (strain KIN4/I / DSM 18386 / JCM 14125).